Here is a 377-residue protein sequence, read N- to C-terminus: Meiotic driver cw9 (377 aa).

Disordered stretches follow at residues 1–49 (MKNK…DLNN) and 64–100 (NKST…GTTD). Basic and acidic residues predominate over residues 11–29 (SMDEMSAKNDNEIDLEKGP). 7 consecutive transmembrane segments (helical) span residues 105–125 (FLIK…PAVC), 142–162 (WTLF…LTYF), 172–192 (VTII…AQCV), 218–238 (VVII…RSKF), 252–272 (CSIS…FWTL), 276–296 (FSGL…TKGL), and 306–326 (ATGY…LFFY).

The protein belongs to the WTF family. In terms of assembly, homomer. Forms protein aggregates. The two isoforms can interact with each other and with themselves. High sequence similarity is required for their interaction.

It is found in the spore membrane. The protein resides in the vacuole membrane. Its subcellular location is the ascus epiplasm. It localises to the cytoplasm. The protein localises to the endoplasmic reticulum membrane. Functionally, promotes unequal transmission of alleles from the parental zygote to progeny spores by acting as poison/antidote system where the poison and antidote proteins are produced from the same locus; the poison component is trans-acting and targets all spores within an ascus whereas the antidote component is spore-specific, leading to poisoning of all progeny that do not inherit the allele. Its function is as follows. Localizes isoform 2 to the vacuole thereby facilitating its degradation. In terms of biological role, forms toxic aggregates that disrupt spore maturation. The chain is Meiotic driver cw9 from Schizosaccharomyces pombe (Fission yeast).